Reading from the N-terminus, the 398-residue chain is Probable aminomethyltransferase (398 aa).

The protein belongs to the GcvT family. The glycine cleavage system is composed of four proteins: P, T, L and H.

The enzyme catalyses N(6)-[(R)-S(8)-aminomethyldihydrolipoyl]-L-lysyl-[protein] + (6S)-5,6,7,8-tetrahydrofolate = N(6)-[(R)-dihydrolipoyl]-L-lysyl-[protein] + (6R)-5,10-methylene-5,6,7,8-tetrahydrofolate + NH4(+). In terms of biological role, the glycine cleavage system catalyzes the degradation of glycine. This Pyrococcus horikoshii (strain ATCC 700860 / DSM 12428 / JCM 9974 / NBRC 100139 / OT-3) protein is Probable aminomethyltransferase.